A 98-amino-acid polypeptide reads, in one-letter code: MLNFVRIFLPFLKYQVFTDKTNDLLKYNIYVFDVDKKLNKLQIKNIIEYIFNIKIYSINTYIKNNKYCCFNKIKGLKTNYKRAFIRLKSVNIIPYFSC.

The protein belongs to the universal ribosomal protein uL23 family. In terms of assembly, part of the 50S ribosomal subunit.

It is found in the plastid. Binds to 23S rRNA. The chain is Large ribosomal subunit protein uL23c (rpl23) from Euglena longa (Euglenophycean alga).